We begin with the raw amino-acid sequence, 428 residues long: Histidinol dehydrogenase (428 aa).

The NAD(+) site is built by Tyr-129, Gln-188, and Asn-211. Residues Ser-234, Gln-256, and His-259 each contribute to the substrate site. Zn(2+) contacts are provided by Gln-256 and His-259. Catalysis depends on proton acceptor residues Glu-323 and His-324. Positions 324, 357, 411, and 416 each coordinate substrate. Zn(2+) is bound at residue Asp-357. His-416 provides a ligand contact to Zn(2+).

The protein belongs to the histidinol dehydrogenase family. The cofactor is Zn(2+).

It catalyses the reaction L-histidinol + 2 NAD(+) + H2O = L-histidine + 2 NADH + 3 H(+). It functions in the pathway amino-acid biosynthesis; L-histidine biosynthesis; L-histidine from 5-phospho-alpha-D-ribose 1-diphosphate: step 9/9. Its function is as follows. Catalyzes the sequential NAD-dependent oxidations of L-histidinol to L-histidinaldehyde and then to L-histidine. This Caulobacter vibrioides (strain ATCC 19089 / CIP 103742 / CB 15) (Caulobacter crescentus) protein is Histidinol dehydrogenase.